Consider the following 317-residue polypeptide: L-lactate dehydrogenase (317 aa).

Residues Val-16, Asp-37, Arg-42, Tyr-67, and 81 to 82 (GA) contribute to the NAD(+) site. Positions 84 and 90 each coordinate substrate. NAD(+)-binding positions include Ser-103, 120–122 (AAN), and Ser-145. 122 to 125 (NPVD) contacts substrate. 150-153 (DSAR) contacts substrate. Residue His-177 is the Proton acceptor of the active site. Tyr-221 is modified (phosphotyrosine). Position 230 (Thr-230) interacts with substrate.

Belongs to the LDH/MDH superfamily. LDH family. As to quaternary structure, homotetramer.

It localises to the cytoplasm. The enzyme catalyses (S)-lactate + NAD(+) = pyruvate + NADH + H(+). It participates in fermentation; pyruvate fermentation to lactate; (S)-lactate from pyruvate: step 1/1. Catalyzes the conversion of lactate to pyruvate. The sequence is that of L-lactate dehydrogenase from Limosilactobacillus fermentum (strain NBRC 3956 / LMG 18251) (Lactobacillus fermentum).